Reading from the N-terminus, the 232-residue chain is 7-cyano-7-deazaguanine synthase (232 aa).

Residue 8 to 18 (FSGGQDSTTCL) participates in ATP binding. The Zn(2+) site is built by Cys188, Cys197, Cys200, and Cys203.

This sequence belongs to the QueC family. Zn(2+) serves as cofactor.

The catalysed reaction is 7-carboxy-7-deazaguanine + NH4(+) + ATP = 7-cyano-7-deazaguanine + ADP + phosphate + H2O + H(+). It functions in the pathway purine metabolism; 7-cyano-7-deazaguanine biosynthesis. Functionally, catalyzes the ATP-dependent conversion of 7-carboxy-7-deazaguanine (CDG) to 7-cyano-7-deazaguanine (preQ(0)). The polypeptide is 7-cyano-7-deazaguanine synthase (Buchnera aphidicola subsp. Schizaphis graminum (strain Sg)).